The sequence spans 360 residues: Transcription elongation factor, mitochondrial (360 aa).

The N-terminal 35 residues, 1-35, are a transit peptide targeting the mitochondrion; it reads MSGSVLFTAGERWRCFLTPSRSSLYWALHNFCCRK.

It belongs to the TEFM family. As to quaternary structure, interacts with POLRMT.

The protein resides in the mitochondrion matrix. It is found in the mitochondrion nucleoid. Functionally, transcription elongation factor which increases mitochondrial RNA polymerase processivity. Regulates transcription of the mitochondrial genome, including genes important for the oxidative phosphorylation machinery. This is Transcription elongation factor, mitochondrial (TEFM) from Homo sapiens (Human).